The following is a 439-amino-acid chain: MGSMCIAMAPRTLLLLIGCQLALGFNEPLNVVSHLSDDWFLFGDSRSDCSYVENNGHPAFDWLDLPQELCHSGKISAKSGNSLFKSFHFTDWYNYTGEGDQVIFYEGVNFSPSHGFKCLAEGDNKRWMGNKARFYALVYKKMAYYRSLSFVNVSYSYGGKAKPTAICKDNTLTLNNPTFISKESNYVDYYYESDANFTLEGCDEFIVPLCVFNGHSRGSSSDPANKYYMDSQMYYNMDTGVFYGFNSTLDVGNTAQNPGLDLTCIYYALTPGNYKAVSLEYLLTIPSKAICLRKPKRFMPVQVVDSRWNNAKHSDNMTAVACQTPYCLFRNTSSGYNGSTHDVHHGGFHFRKLLSGLLYNVSCIAQQGAFFYNNVSSQWPVLGYGQCPTAANIEFIAPVCLYDPLPVILLGVLLGIAVLIIVFLLFYFMTDSGVRLHEA.

Residues 1 to 22 (MGSMCIAMAPRTLLLLIGCQLA) form the signal peptide. The segment at 12–132 (TLLLLIGCQL…DNKRWMGNKA (121 aa)) is esterase domain 1. Over 23-407 (LGFNEPLNVV…PVCLYDPLPV (385 aa)) the chain is Virion surface. The active-site Nucleophile is the Ser45. Cys49 and Cys70 are oxidised to a cystine. N-linked (GlcNAc...) asparagine; by host glycans are attached at residues Asn94, Asn152, Asn196, Asn246, and Asn316. Cys118 and Cys167 are disulfide-bonded. The receptor binding stretch occupies residues 133–281 (RFYALVYKKM…GNYKAVSLEY (149 aa)). Cystine bridges form between Cys202/Cys291 and Cys210/Cys264. Positions 282–395 (LLTIPSKAIC…QCPTAANIEF (114 aa)) are esterase domain 2. Cys322 and Cys327 are disulfide-bonded. N-linked (GlcNAc...) asparagine; by host glycans are attached at residues Asn331 and Asn337. Residues Asp342 and His345 each act as charge relay system in the active site. N-linked (GlcNAc...) asparagine; by host glycans are attached at residues Asn360 and Asn374. A disulfide bond links Cys363 and Cys387. The helical transmembrane segment at 408-428 (ILLGVLLGIAVLIIVFLLFYF) threads the bilayer. The Intravirion portion of the chain corresponds to 429-439 (MTDSGVRLHEA).

Belongs to the influenza type C/coronaviruses hemagglutinin-esterase family. In terms of assembly, homodimer; disulfide-linked. Forms a complex with the M protein in the pre-Golgi. Associates then with S-M complex to form a ternary complex S-M-HE. Post-translationally, N-glycosylated in the host RER.

It localises to the virion membrane. The protein resides in the host cell membrane. The enzyme catalyses N-acetyl-9-O-acetylneuraminate + H2O = N-acetylneuraminate + acetate + H(+). The catalysed reaction is N-acetyl-4-O-acetylneuraminate + H2O = N-acetylneuraminate + acetate + H(+). In terms of biological role, structural protein that makes short spikes at the surface of the virus. Contains receptor binding and receptor-destroying activities. Mediates de-O-acetylation of N-acetyl-4-O-acetylneuraminic acid, which is probably the receptor determinant recognized by the virus on the surface of erythrocytes and susceptible cells. This receptor-destroying activity is important for virus release as it probably helps preventing self-aggregation and ensures the efficient spread of the progeny virus from cell to cell. May serve as a secondary viral attachment protein for initiating infection, the spike protein being the major one. May become a target for both the humoral and the cellular branches of the immune system. This is Hemagglutinin-esterase from Puffinosis coronavirus (PV).